Here is a 121-residue protein sequence, read N- to C-terminus: Holin-like protein CidA 1 (121 aa).

Helical transmembrane passes span 7 to 24 (SGQILLLFCFAWTGEWIA), 28 to 50 (HLPVPGSIIGIFLLLISLKFNLV), 62 to 81 (LLKELILFFIPSAVAVIRYR), and 91 to 113 (LILIIMISTLCVTLVTGLLTELL).

It belongs to the CidA/LrgA family. CidA subfamily.

It is found in the cell membrane. Increases the activity of extracellular murein hydrolases possibly by mediating their export via hole formation. Inhibited by the antiholin-like proteins LrgAB. In an unstressed cell, the LrgAB products probably inhibit the function of the CidA protein. When a cell is stressed by the addition of antibiotics or by other factors in the environment, CidA possibly oligomerizes within the bacterial cell membrane, creating lesions that disrupt the proton motive force, which in turn results in loss of cell viability. These lesions are also hypothesized to regulate the subsequent cell lysis by either allowing the murein hydrolases access to the cell wall substrate and/or regulating their activity by a possible change in the cell wall pH that results from loss of membrane potential. This Bacillus cereus (strain ATCC 14579 / DSM 31 / CCUG 7414 / JCM 2152 / NBRC 15305 / NCIMB 9373 / NCTC 2599 / NRRL B-3711) protein is Holin-like protein CidA 1 (cidA1).